The primary structure comprises 227 residues: Rho-related GTP-binding protein RhoN (227 aa).

Gly14–Thr21 provides a ligand contact to GTP. An Effector region motif is present at residues Tyr36 to Tyr44. GTP-binding positions include Asp61–Ser65 and Cys119–Asp122. Residues His186 to Met227 form a disordered region. Residues Arg207 to Met227 show a composition bias toward basic and acidic residues. A Cysteine methyl ester modification is found at Cys224. A lipid anchor (S-geranylgeranyl cysteine) is attached at Cys224. The propeptide at Asn225–Met227 is removed in mature form.

The protein belongs to the small GTPase superfamily. Rho family. Interacts with the Rho-GAP domain of RACGAP1. Interacts with UBXD5. Interacts with PRAG1. Expressed specifically in neurons in the brain and spinal cord and also in hepatic stellate cells.

Its subcellular location is the cytoplasmic vesicle. The protein resides in the secretory vesicle. The protein localises to the acrosome membrane. In terms of biological role, may be specifically involved in neuronal and hepatic functions. Is a C3 toxin-insensitive member of the Rho subfamily. The chain is Rho-related GTP-binding protein RhoN (Rnd2) from Mus musculus (Mouse).